A 472-amino-acid polypeptide reads, in one-letter code: Methanethiol oxidase (472 aa).

N-acetylalanine is present on alanine 2. Phosphoserine occurs at positions 111 and 467.

Belongs to the selenium-binding protein family. Interacts with USP33. Post-translationally, the N-terminus is blocked. Present in liver and colon (at protein level).

The protein localises to the nucleus. Its subcellular location is the cytoplasm. The protein resides in the cytosol. It localises to the membrane. The enzyme catalyses methanethiol + O2 + H2O = hydrogen sulfide + formaldehyde + H2O2 + H(+). Its pathway is organosulfur degradation. Functionally, catalyzes the oxidation of methanethiol, an organosulfur compound known to be produced in substantial amounts by gut bacteria. Selenium-binding protein which may be involved in the sensing of reactive xenobiotics in the cytoplasm. May be involved in intra-Golgi protein transport. The protein is Methanethiol oxidase (Selenbp1) of Rattus norvegicus (Rat).